Consider the following 191-residue polypeptide: MMIKQAEFITSAVSITDLPKDDFDHFLILGRSNVGKSSLINAITNRKKLARVSQTPGKTITLNLYLLNQSLYLVDAPGYGYAKRSKTQTLTFMRMINEYIQLNGHLKKIILLVDFNIGPTQDDLDMYIELQAFDVDIIVVTTKYDKVKSSHRLKQEKVIRSKFFEGQKIYFTSSETKFGIDKLINEEFSNE.

The EngB-type G domain occupies 22–191 (DFDHFLILGR…KLINEEFSNE (170 aa)). GTP is bound by residues 30 to 37 (GRSNVGKS), 57 to 61 (GKTIT), 75 to 78 (DAPG), 142 to 145 (TKYD), and 172 to 174 (TSS). Positions 37 and 59 each coordinate Mg(2+).

This sequence belongs to the TRAFAC class TrmE-Era-EngA-EngB-Septin-like GTPase superfamily. EngB GTPase family. Mg(2+) serves as cofactor.

Necessary for normal cell division and for the maintenance of normal septation. This chain is Probable GTP-binding protein EngB, found in Acholeplasma laidlawii (strain PG-8A).